The primary structure comprises 840 residues: Probable alpha-glucuronidase A (840 aa).

Positions 1–19 (MWSGIPVFALLSSIGIAAA) are cleaved as a signal peptide. N-linked (GlcNAc...) asparagine glycans are attached at residues asparagine 50, asparagine 149, asparagine 222, asparagine 262, asparagine 279, asparagine 310, asparagine 465, asparagine 527, asparagine 576, asparagine 610, asparagine 682, asparagine 723, and asparagine 732.

Belongs to the glycosyl hydrolase 67 family.

It localises to the secreted. The catalysed reaction is an alpha-D-glucuronoside + H2O = D-glucuronate + an alcohol. Its function is as follows. Alpha-glucuronidase involved in the hydrolysis of xylan, a major structural heterogeneous polysaccharide found in plant biomass representing the second most abundant polysaccharide in the biosphere, after cellulose. Releases 4-O-methylglucuronic acid from xylan. This chain is Probable alpha-glucuronidase A (aguA), found in Neosartorya fischeri (strain ATCC 1020 / DSM 3700 / CBS 544.65 / FGSC A1164 / JCM 1740 / NRRL 181 / WB 181) (Aspergillus fischerianus).